The chain runs to 44 residues: Antibacterial protein 3 (44 aa).

Residue Met-1 is modified to N-formylmethionine.

This sequence belongs to the staphylococcal hemolytic protein family.

Its subcellular location is the secreted. In terms of biological role, has hemolytic activity and also inhibits the growth of gonococci. This chain is Antibacterial protein 3, found in Staphylococcus haemolyticus.